Consider the following 229-residue polypeptide: Cytidylate kinase (229 aa).

10–18 contacts ATP; sequence GHSSSGKST.

This sequence belongs to the cytidylate kinase family. Type 1 subfamily.

The protein resides in the cytoplasm. The catalysed reaction is CMP + ATP = CDP + ADP. It carries out the reaction dCMP + ATP = dCDP + ADP. This chain is Cytidylate kinase, found in Parabacteroides distasonis (strain ATCC 8503 / DSM 20701 / CIP 104284 / JCM 5825 / NCTC 11152).